The following is a 365-amino-acid chain: Serpentine receptor class epsilon-38 (365 aa).

Transmembrane regions (helical) follow at residues 26 to 46 (GMYL…GVII), 65 to 85 (IMTA…LLII), 124 to 144 (ALVI…FGIL), 168 to 188 (IPVF…YFVL), 196 to 216 (LGTS…LAVW), 256 to 276 (LVIV…CLVI), and 285 to 305 (IFIH…CSTL).

It belongs to the nematode receptor-like protein sre family.

Its subcellular location is the membrane. This Caenorhabditis elegans protein is Serpentine receptor class epsilon-38 (sre-38).